Here is a 653-residue protein sequence, read N- to C-terminus: 4-hydroxy-2,2'-bipyrrole-5-methanol synthase PigH (653 aa).

The 78-residue stretch at 7-84 (ETYETLKQSV…DALDGILQRE (78 aa)) folds into the Carrier domain. Ser-45 bears the O-(pantetheine 4'-phosphoryl)serine mark. Position 354-355 (354-355 (GY)) interacts with pyridoxal 5'-phosphate. Position 379 (His-379) interacts with substrate. Positions 426, 454, and 482 each coordinate pyridoxal 5'-phosphate. Lys-485 is modified (N6-(pyridoxal phosphate)lysine). Residues 512 to 532 (VFAATIPAPVAAGVIASIDVM) form a helical membrane-spanning segment.

Pyridoxal 5'-phosphate serves as cofactor.

It localises to the membrane. It participates in antibiotic biosynthesis; prodigiosin biosynthesis. Involved in the biosynthesis of 4-methoxy-2,2'-bipyrrole-5-carbaldehyde (MBC), one of the terminal products involved in the biosynthesis of the red antibiotic prodigiosin (Pig). Carrier of the L-malonyl group (malonyl-S-PigH), which is decarboxylated by PigJ to yield a C2 carbanion acetyl-S-PigH. Then the pyrrolyl group of pyrrolyl-S-cysteinyl PigJ intermediate is captured by the C2 carbanion acetyl-S-PigH to yield the pyrrolyl-beta-ketoacyl-S-PigH. In the last step, PigH catalyzes the decarboxylative condensation between the pyrrolyl-beta-ketoacyl (pyrrolyl-beta-ketoacyl-S-PigH) and L-serine to yield 4-hydroxy-2,2'-bipyrrole-5-methanol (HBM). The polypeptide is 4-hydroxy-2,2'-bipyrrole-5-methanol synthase PigH (Serratia sp. (strain ATCC 39006) (Prodigiosinella confusarubida)).